Reading from the N-terminus, the 367-residue chain is Putative S-adenosyl-L-methionine-dependent methyltransferase MT0751 (367 aa).

S-adenosyl-L-methionine contacts are provided by residues Asp-137 and 166–167; that span reads DL. The segment covering 348–358 has biased composition (polar residues); the sequence is TRSDAHQASTT. Residues 348-367 form a disordered region; sequence TRSDAHQASTTAPPPPGLTG.

This sequence belongs to the UPF0677 family.

Its function is as follows. Exhibits S-adenosyl-L-methionine-dependent methyltransferase activity. This is Putative S-adenosyl-L-methionine-dependent methyltransferase MT0751 from Mycobacterium tuberculosis (strain CDC 1551 / Oshkosh).